The primary structure comprises 256 residues: Thiazole synthase (256 aa).

The Schiff-base intermediate with DXP role is filled by Lys96. Residues Gly157, 184 to 185 (AG), and 206 to 207 (NT) each bind 1-deoxy-D-xylulose 5-phosphate.

Belongs to the ThiG family. As to quaternary structure, homotetramer. Forms heterodimers with either ThiH or ThiS.

The protein localises to the cytoplasm. It carries out the reaction [ThiS sulfur-carrier protein]-C-terminal-Gly-aminoethanethioate + 2-iminoacetate + 1-deoxy-D-xylulose 5-phosphate = [ThiS sulfur-carrier protein]-C-terminal Gly-Gly + 2-[(2R,5Z)-2-carboxy-4-methylthiazol-5(2H)-ylidene]ethyl phosphate + 2 H2O + H(+). It functions in the pathway cofactor biosynthesis; thiamine diphosphate biosynthesis. Catalyzes the rearrangement of 1-deoxy-D-xylulose 5-phosphate (DXP) to produce the thiazole phosphate moiety of thiamine. Sulfur is provided by the thiocarboxylate moiety of the carrier protein ThiS. In vitro, sulfur can be provided by H(2)S. The polypeptide is Thiazole synthase (Brucella anthropi (strain ATCC 49188 / DSM 6882 / CCUG 24695 / JCM 21032 / LMG 3331 / NBRC 15819 / NCTC 12168 / Alc 37) (Ochrobactrum anthropi)).